A 215-amino-acid polypeptide reads, in one-letter code: Probable phosphoglycerate mutase GpmB (215 aa).

Residues 8-15, 21-22, Arg-58, 82-85, 104-105, and 151-152 contribute to the substrate site; these read RHGETQWN, QG, ELDM, RR, and GM. His-9 (tele-phosphohistidine intermediate) is an active-site residue. Glu-82 (proton donor/acceptor) is an active-site residue.

This sequence belongs to the phosphoglycerate mutase family. GpmB subfamily.

It catalyses the reaction (2R)-2-phosphoglycerate = (2R)-3-phosphoglycerate. It participates in carbohydrate degradation; glycolysis; pyruvate from D-glyceraldehyde 3-phosphate: step 3/5. In Cronobacter sakazakii (strain ATCC BAA-894) (Enterobacter sakazakii), this protein is Probable phosphoglycerate mutase GpmB.